Consider the following 108-residue polypeptide: Thioredoxin (108 aa).

A Thioredoxin domain is found at 2-108 (GKYFEATDKN…IAKKIDEHIG (107 aa)). A disulfide bridge links C32 with C35.

It belongs to the thioredoxin family.

Participates in various redox reactions through the reversible oxidation of its active center dithiol to a disulfide and catalyzes dithiol-disulfide exchange reactions. In Chlorobaculum thiosulfatiphilum (Chlorobium limicola f.sp. thiosulfatophilum), this protein is Thioredoxin (trxA).